Reading from the N-terminus, the 615-residue chain is Dihydroxy-acid dehydratase (615 aa).

A Mg(2+)-binding site is contributed by Asp81. [2Fe-2S] cluster is bound at residue Cys122. Positions 123 and 124 each coordinate Mg(2+). Lys124 carries the post-translational modification N6-carboxylysine. Cys195 contacts [2Fe-2S] cluster. Mg(2+) is bound at residue Glu491. Ser517 serves as the catalytic Proton acceptor.

The protein belongs to the IlvD/Edd family. As to quaternary structure, homodimer. The cofactor is [2Fe-2S] cluster. Mg(2+) is required as a cofactor.

It catalyses the reaction (2R)-2,3-dihydroxy-3-methylbutanoate = 3-methyl-2-oxobutanoate + H2O. The enzyme catalyses (2R,3R)-2,3-dihydroxy-3-methylpentanoate = (S)-3-methyl-2-oxopentanoate + H2O. It participates in amino-acid biosynthesis; L-isoleucine biosynthesis; L-isoleucine from 2-oxobutanoate: step 3/4. It functions in the pathway amino-acid biosynthesis; L-valine biosynthesis; L-valine from pyruvate: step 3/4. Functions in the biosynthesis of branched-chain amino acids. Catalyzes the dehydration of (2R,3R)-2,3-dihydroxy-3-methylpentanoate (2,3-dihydroxy-3-methylvalerate) into 2-oxo-3-methylpentanoate (2-oxo-3-methylvalerate) and of (2R)-2,3-dihydroxy-3-methylbutanoate (2,3-dihydroxyisovalerate) into 2-oxo-3-methylbutanoate (2-oxoisovalerate), the penultimate precursor to L-isoleucine and L-valine, respectively. The sequence is that of Dihydroxy-acid dehydratase from Pseudoalteromonas atlantica (strain T6c / ATCC BAA-1087).